The sequence spans 357 residues: Peptide chain release factor 1 (357 aa).

The residue at position 232 (Q232) is an N5-methylglutamine.

The protein belongs to the prokaryotic/mitochondrial release factor family. Post-translationally, methylated by PrmC. Methylation increases the termination efficiency of RF1.

It is found in the cytoplasm. In terms of biological role, peptide chain release factor 1 directs the termination of translation in response to the peptide chain termination codons UAG and UAA. This chain is Peptide chain release factor 1, found in Oleidesulfovibrio alaskensis (strain ATCC BAA-1058 / DSM 17464 / G20) (Desulfovibrio alaskensis).